Here is a 166-residue protein sequence, read N- to C-terminus: Protein-export protein SecB (166 aa).

A compositionally biased stretch (polar residues) spans 1 to 16 (MTDTSAAGNPTPGQQP). Positions 1–21 (MTDTSAAGNPTPGQQPANPPS) are disordered.

This sequence belongs to the SecB family. Homotetramer, a dimer of dimers. One homotetramer interacts with 1 SecA dimer.

It localises to the cytoplasm. One of the proteins required for the normal export of preproteins out of the cell cytoplasm. It is a molecular chaperone that binds to a subset of precursor proteins, maintaining them in a translocation-competent state. It also specifically binds to its receptor SecA. The sequence is that of Protein-export protein SecB from Hyphomonas neptunium (strain ATCC 15444).